Reading from the N-terminus, the 561-residue chain is Transmembrane protein 209 (561 aa).

2 positions are modified to phosphoserine: S9 and S11. Residues 28–48 (VVLAWGLLNVSMAGMIYTEMT) form a helical membrane-spanning segment. The N-linked (GlcNAc...) asparagine glycan is linked to N57. Residues 60–80 (YWPLWYIELALASLFSLNALF) traverse the membrane as a helical segment. S98 carries the post-translational modification Phosphoserine. Disordered regions lie at residues 120 to 156 (LAAT…KFAT) and 196 to 233 (SLSP…TDKE). Positions 138 to 152 (SVLSYSPSRSPSTSP) are enriched in low complexity. S201 and S248 each carry phosphoserine. The disordered stretch occupies residues 250–270 (EEKQHRVKLGSPDSTSPSTSP). Positions 260 to 270 (SPDSTSPSTSP) are enriched in low complexity. An N-linked (GlcNAc...) asparagine glycan is attached at N274. A Phosphoserine modification is found at S278.

Interacts with NUP205.

Its subcellular location is the membrane. It is found in the nucleus envelope. The protein localises to the golgi apparatus. The protein resides in the cytoplasm. Nuclear envelope protein which in association with NUP205, may be involved in nuclear transport of various nuclear proteins in addition to MYC. The protein is Transmembrane protein 209 (Tmem209) of Rattus norvegicus (Rat).